The chain runs to 564 residues: MLANSASVRILIKGGKVVNDDCTHEADVYIENGIIQQVGRELMIPGGAKVIDATGKLVIPGGIDTSTHFHQTFMNATCVDDFYHGTKAALVGGTTMIIGHVLPDKETSLVDAYEKCRGLADPKVCCDYALHVGITWWAPKVKAEMETLVREKGVNSFQMFMTYKDLYMLRDSELYQVLHACKDIGAIARVHAENGELVAEGAKEALDLGITGPEGIEISRPEELEAEATHRVITIANRTHCPIYLVNVSSISAGDVIAAAKMQGKVVLAETTTAHATLTGLHYYHQDWSHAAAYVTVPPLRLDTNTSTYLMSLLANDTLNIVASDHRPFTTKQKAMGKEDFTKIPHGVSGVQDRMSVIWERGVVGGKMDENRFVAVTSSNAAKLLNLYPRKGRIIPGADADVVVWDPEATKTISASTQVQGGDFNLYENMRCHGVPLVTISRGRVVYENGVFMCAEGTGKFCPLRSFPDTVYKKLVQREKTLKVRGVDRTPYLGDVAVVVHPGKKEMGTPLADTPTRPVTRHGGMRDLHESSFSLSGSQIDDHVPKRASARILAPPGGRSSGIW.

Phosphothreonine occurs at positions 509 and 514. A phosphoserine mark is found at Ser-532 and Ser-538. An Omega-N-methylarginine modification is found at Arg-559.

It belongs to the metallo-dependent hydrolases superfamily. Hydantoinase/dihydropyrimidinase family. As to quaternary structure, homotetramer, and heterotetramer with other DPYS-like proteins. Interacts with DPYSL2, DPYSL3 and DPYSL4. Interacts with MAP2 and TUBB3.

It is found in the cytoplasm. Involved in the negative regulation of dendrite outgrowth. This chain is Dihydropyrimidinase-related protein 5 (DPYSL5), found in Homo sapiens (Human).